Here is a 299-residue protein sequence, read N- to C-terminus: MLPDIQSTKGDGEGESLSWVGMEQIDLPIDIAGRPVSAKVNAGINLLSSPEAEKGIHMSRLYLLLDELTQGEITPALLQHVLKAFLVSHQGRSDEASIEISGDLLLSRKSLNSNHSGWKAYPLTLSAELRQSFTVTLKVGIPYSSTCPASAALSRHVAGLQFSKDFGNRIDRLPAAEIADWLVEKGMPATPHSQRSWAWVSIRLNPEAKSLPVIELIDYAEVALGTAVQTVVKRSDEQAFAVANGQNLMFCEDAARRLNNVFRCAPFCEAFDIRVEHQESLHPHNAVARIHWKGSKNVT.

The protein belongs to the GTP cyclohydrolase IV family.

The catalysed reaction is GTP + H2O = 7,8-dihydroneopterin 3'-triphosphate + formate + H(+). It participates in cofactor biosynthesis; 7,8-dihydroneopterin triphosphate biosynthesis; 7,8-dihydroneopterin triphosphate from GTP: step 1/1. In terms of biological role, converts GTP to 7,8-dihydroneopterin triphosphate. This Citrobacter koseri (strain ATCC BAA-895 / CDC 4225-83 / SGSC4696) protein is GTP cyclohydrolase FolE2.